The following is a 383-amino-acid chain: Dual-specificity RNA methyltransferase RlmN (383 aa).

Glu-93 acts as the Proton acceptor in catalysis. Positions 99 to 339 (EETRGTLCVS…TTIRKTRGDD (241 aa)) constitute a Radical SAM core domain. Cys-106 and Cys-344 are oxidised to a cystine. Residues Cys-113, Cys-117, and Cys-120 each coordinate [4Fe-4S] cluster. S-adenosyl-L-methionine is bound by residues 170–171 (GE), Ser-202, 224–226 (SLH), and Asn-301. Residue Cys-344 is the S-methylcysteine intermediate of the active site.

This sequence belongs to the radical SAM superfamily. RlmN family. [4Fe-4S] cluster is required as a cofactor.

It is found in the cytoplasm. The enzyme catalyses adenosine(2503) in 23S rRNA + 2 reduced [2Fe-2S]-[ferredoxin] + 2 S-adenosyl-L-methionine = 2-methyladenosine(2503) in 23S rRNA + 5'-deoxyadenosine + L-methionine + 2 oxidized [2Fe-2S]-[ferredoxin] + S-adenosyl-L-homocysteine. It catalyses the reaction adenosine(37) in tRNA + 2 reduced [2Fe-2S]-[ferredoxin] + 2 S-adenosyl-L-methionine = 2-methyladenosine(37) in tRNA + 5'-deoxyadenosine + L-methionine + 2 oxidized [2Fe-2S]-[ferredoxin] + S-adenosyl-L-homocysteine. Specifically methylates position 2 of adenine 2503 in 23S rRNA and position 2 of adenine 37 in tRNAs. m2A2503 modification seems to play a crucial role in the proofreading step occurring at the peptidyl transferase center and thus would serve to optimize ribosomal fidelity. The protein is Dual-specificity RNA methyltransferase RlmN of Ralstonia pickettii (strain 12J).